The primary structure comprises 296 residues: MAPSNLPPVFNATSQDIEMLLAAQCHLGSKNLQVHMEPYLWKTRPDGINVINIGKTWEKIVLAARIIAAVDNPADICVISARPYGQRAVLKFAAHTGAVAIAGRFTPGNFTNYITRSFKEPRLIIVTDPRTDHQAIKEASYVNIPVIALCDTDSPTEFVDVAIPTNNKGRHAIGLIWWMLAREVLRLRGTLASRETEWDVVVDLYFYRDPEAEENKEIEEAKVPGAEEVGAAAIESGLVGDSWEAQAAPAFAGAGVPAGAAPGWEAEGGVDWAASSAAPADTWAGESGNPDAGVKW.

Over residues 274–284 (ASSAAPADTWA) the composition is skewed to low complexity. Residues 274 to 296 (ASSAAPADTWAGESGNPDAGVKW) form a disordered region.

Belongs to the universal ribosomal protein uS2 family. In terms of assembly, component of the small ribosomal subunit. Mature ribosomes consist of a small (40S) and a large (60S) subunit. The 40S subunit contains about 33 different proteins and 1 molecule of RNA (18S). The 60S subunit contains about 49 different proteins and 3 molecules of RNA (25S, 5.8S and 5S). Interacts with RPS21.

The protein resides in the cytoplasm. Functionally, required for the assembly and/or stability of the 40S ribosomal subunit. Required for the processing of the 20S rRNA-precursor to mature 18S rRNA in a late step of the maturation of 40S ribosomal subunits. This chain is Small ribosomal subunit protein uS2, found in Ajellomyces capsulatus (strain G186AR / H82 / ATCC MYA-2454 / RMSCC 2432) (Darling's disease fungus).